A 283-amino-acid polypeptide reads, in one-letter code: Acetylglutamate kinase (283 aa).

Substrate contacts are provided by residues 63–64 (GG), Arg-85, and Asn-178.

It belongs to the acetylglutamate kinase family. ArgB subfamily.

The protein resides in the cytoplasm. It carries out the reaction N-acetyl-L-glutamate + ATP = N-acetyl-L-glutamyl 5-phosphate + ADP. It functions in the pathway amino-acid biosynthesis; L-arginine biosynthesis; N(2)-acetyl-L-ornithine from L-glutamate: step 2/4. Catalyzes the ATP-dependent phosphorylation of N-acetyl-L-glutamate. The protein is Acetylglutamate kinase of Prochlorococcus marinus (strain MIT 9215).